We begin with the raw amino-acid sequence, 356 residues long: Ubiquitin-conjugating enzyme E2 variant 3 (356 aa).

A disordered region spans residues 1 to 83 (MSDQPGTSRP…LEDLHNYHRE (83 aa)). A compositionally biased stretch (polar residues) spans 18–32 (PTKTATRRRARPIAI). Residues 63-76 (QPRKTVPKNVPLED) are compositionally biased toward basic and acidic residues. A UBC core domain is found at 169 to 324 (DIITEFMNRS…AREFVMKMAG (156 aa)).

Belongs to the ubiquitin-conjugating enzyme family. May interact with pmk-3. Expressed ubiquitously.

The protein localises to the nucleus. Its subcellular location is the cytoplasm. The protein resides in the cell projection. It localises to the dendrite. It is found in the axon. The protein localises to the cilium. Functionally, possible negative regulator of polyubiquitination. May modulate the activity of the p38 MAP kinase pnk-3. May have a role in axon termination and synaptic transmission at motor and mechanosensory neurons. Plays a role in intraflagellar transport in cilia and cilium length regulation. The chain is Ubiquitin-conjugating enzyme E2 variant 3 from Caenorhabditis elegans.